The sequence spans 288 residues: ATP synthase gamma chain (288 aa).

Belongs to the ATPase gamma chain family. As to quaternary structure, F-type ATPases have 2 components, CF(1) - the catalytic core - and CF(0) - the membrane proton channel. CF(1) has five subunits: alpha(3), beta(3), gamma(1), delta(1), epsilon(1). CF(0) has three main subunits: a, b and c.

It localises to the cell inner membrane. Functionally, produces ATP from ADP in the presence of a proton gradient across the membrane. The gamma chain is believed to be important in regulating ATPase activity and the flow of protons through the CF(0) complex. In Actinobacillus pleuropneumoniae serotype 3 (strain JL03), this protein is ATP synthase gamma chain.